Consider the following 475-residue polypeptide: tRNA-2-methylthio-N(6)-dimethylallyladenosine synthase (475 aa).

The segment covering 1-10 (MQETTVKRDG) has biased composition (basic and acidic residues). The disordered stretch occupies residues 1–22 (MQETTVKRDGASPSDAGTPATT). In terms of domain architecture, MTTase N-terminal spans 27–144 (GKLYIRTFGC…LPDLIKRRRA (118 aa)). [4Fe-4S] cluster is bound by residues cysteine 36, cysteine 73, cysteine 107, cysteine 181, cysteine 185, and cysteine 188. The 234-residue stretch at 167–400 (RVDGATAFVS…QALINQQAAA (234 aa)) folds into the Radical SAM core domain. Positions 403–466 (QGMIGTRQRV…TNSLRGRVAG (64 aa)) constitute a TRAM domain.

It belongs to the methylthiotransferase family. MiaB subfamily. As to quaternary structure, monomer. The cofactor is [4Fe-4S] cluster.

The protein localises to the cytoplasm. It carries out the reaction N(6)-dimethylallyladenosine(37) in tRNA + (sulfur carrier)-SH + AH2 + 2 S-adenosyl-L-methionine = 2-methylsulfanyl-N(6)-dimethylallyladenosine(37) in tRNA + (sulfur carrier)-H + 5'-deoxyadenosine + L-methionine + A + S-adenosyl-L-homocysteine + 2 H(+). Functionally, catalyzes the methylthiolation of N6-(dimethylallyl)adenosine (i(6)A), leading to the formation of 2-methylthio-N6-(dimethylallyl)adenosine (ms(2)i(6)A) at position 37 in tRNAs that read codons beginning with uridine. The protein is tRNA-2-methylthio-N(6)-dimethylallyladenosine synthase of Bordetella bronchiseptica (strain ATCC BAA-588 / NCTC 13252 / RB50) (Alcaligenes bronchisepticus).